Reading from the N-terminus, the 132-residue chain is Insulin-like 3 (132 aa).

A signal peptide spans 1–24; it reads MSPRPLAWALVLLGAALAVALALG. 3 disulfides stabilise this stretch: cysteine 36-cysteine 117, cysteine 48-cysteine 130, and cysteine 116-cysteine 121. A propeptide spans 61–104 (c peptide like); the sequence is VAGGDRELLQWLEGRHLHGQVSDGDPMLVLVPQALPQASLHHHH.

Belongs to the insulin family. In terms of assembly, heterodimer of a B chain and an A chain linked by two disulfide bonds. In terms of tissue distribution, more strongly expressed in testis than in ovary.

Its subcellular location is the secreted. Seems to play a role in testicular function. May be a trophic hormone with a role in testicular descent in fetal life. Is a ligand for LGR8 receptor. The protein is Insulin-like 3 (INSL3) of Canis lupus familiaris (Dog).